The primary structure comprises 293 residues: Pantothenate synthetase (293 aa).

30-37 contacts ATP; the sequence is MGYLHKGH. Residue histidine 37 is the Proton donor of the active site. Glutamine 61 is a binding site for (R)-pantoate. Glutamine 61 contributes to the beta-alanine binding site. Position 147–150 (147–150) interacts with ATP; sequence GEKD. (R)-pantoate is bound at residue glutamine 153. ATP-binding positions include valine 176 and 184–187; that span reads CSSR.

Belongs to the pantothenate synthetase family. In terms of assembly, homodimer.

Its subcellular location is the cytoplasm. It catalyses the reaction (R)-pantoate + beta-alanine + ATP = (R)-pantothenate + AMP + diphosphate + H(+). The protein operates within cofactor biosynthesis; (R)-pantothenate biosynthesis; (R)-pantothenate from (R)-pantoate and beta-alanine: step 1/1. Catalyzes the condensation of pantoate with beta-alanine in an ATP-dependent reaction via a pantoyl-adenylate intermediate. The chain is Pantothenate synthetase from Brucella abortus (strain S19).